The sequence spans 825 residues: Heterogeneous nuclear ribonucleoprotein U (825 aa).

The residue at position 2 (Ser-2) is an N-acetylserine; partial. Ser-4 bears the Phosphoserine mark. The SAP domain occupies 8–42 (VKKLKVSELKEELKKRRLSDKGLKAELMERLQAAL). N6-acetyllysine is present on residues Lys-17 and Lys-21. The tract at residues 41–281 (ALDDEEAGGR…PQPPVEEEDE (241 aa)) is disordered. Ser-59 carries the post-translational modification Phosphoserine; by PLK1. Ser-66 carries the phosphoserine modification. Low complexity predominate over residues 72–81 (AGLEQEAAAG). Composition is skewed to acidic residues over residues 82 to 95 (GDEE…EEEG), 120 to 134 (PMEE…ENGD), and 140 to 153 (EGED…EGAG). Residues 159-178 (GEQQPQPPATQQQQPQQQRG) are compositionally biased toward low complexity. Position 186 is an N6-acetyllysine (Lys-186). The residue at position 187 (Ser-187) is an ADP-ribosylserine. Low complexity predominate over residues 199-211 (APPGARQGQQQAG). Lys-215 carries the N6-acetyllysine modification. Residues 233 to 266 (GKTEQKGGDKKRGVKRPREDHGRGYFEYIEENKY) are compositionally biased toward basic and acidic residues. The residue at position 255 (Arg-255) is a Citrulline. N6-acetyllysine; alternate is present on Lys-265. Lys-265 participates in a covalent cross-link: Glycyl lysine isopeptide (Lys-Gly) (interchain with G-Cter in SUMO1); alternate. Lys-265 participates in a covalent cross-link: Glycyl lysine isopeptide (Lys-Gly) (interchain with G-Cter in SUMO2); alternate. The residue at position 266 (Tyr-266) is a Phosphotyrosine. Phosphoserine is present on residues Ser-267 and Ser-271. One can recognise a B30.2/SPRY domain in the interval 267–464 (SRAKSPQPPV…VEFNFGQKEK (198 aa)). Thr-286 is modified (phosphothreonine). Lys-352 bears the N6-acetyllysine mark. Residues 488–672 (PKGPEEKKDC…QKLLEQYKEE (185 aa)) form an ATPase domain region. Lys-495 participates in a covalent cross-link: Glycyl lysine isopeptide (Lys-Gly) (interchain with G-Cter in SUMO2). Residue 504–511 (GLPGAGKT) coordinates ATP. Residues Lys-516 and Lys-524 each carry the N6-acetyllysine; alternate modification. Glycyl lysine isopeptide (Lys-Gly) (interchain with G-Cter in SUMO2); alternate cross-links involve residues Lys-516 and Lys-524. Thr-532 is modified (phosphothreonine). Residue Lys-536 forms a Glycyl lysine isopeptide (Lys-Gly) (interchain with G-Cter in SUMO2) linkage. Position 551 is an N6-acetyllysine (Lys-551). An N6-acetyllysine; alternate modification is found at Lys-565. Lys-565 is covalently cross-linked (Glycyl lysine isopeptide (Lys-Gly) (interchain with G-Cter in SUMO2); alternate). Lys-574 is covalently cross-linked (Glycyl lysine isopeptide (Lys-Gly) (interchain with G-Cter in SUMO2)). Thr-582 carries the post-translational modification Phosphothreonine. Glycyl lysine isopeptide (Lys-Gly) (interchain with G-Cter in SUMO2) cross-links involve residues Lys-609 and Lys-626. Residues 611–626 (EDYKQRTQKKAEVEGK) are actin-binding. N6-acetyllysine; alternate is present on Lys-635. A Glycyl lysine isopeptide (Lys-Gly) (interchain with G-Cter in SUMO2); alternate cross-link involves residue Lys-635. Glycyl lysine isopeptide (Lys-Gly) (interchain with G-Cter in SUMO2) cross-links involve residues Lys-664 and Lys-670. Residues 671–683 (EESKKALPPEKKQ) show a composition bias toward basic and acidic residues. The disordered stretch occupies residues 671–749 (EESKKALPPE…GGGGGGSGGI (79 aa)). At Arg-702 the chain carries Omega-N-methylarginine. A compositionally biased stretch (gly residues) spans 710 to 728 (GGFNMRGGNFRGGAPGNRG). The tract at residues 714–739 (MRGGNFRGGAPGNRGGYNRRGNMPQR) is RNA-binding RGG-box. Asymmetric dimethylarginine occurs at positions 715, 720, and 727. Residues Arg-733 and Arg-739 each carry the asymmetric dimethylarginine; alternate modification. 2 positions are modified to omega-N-methylarginine; alternate: Arg-733 and Arg-739. Arg-739 carries the dimethylated arginine; in A2780 ovarian carcinoma cell line modification. Over residues 739–749 (RGGGGGGSGGI) the composition is skewed to gly residues. Residues Arg-755 and Arg-762 each carry the asymmetric dimethylarginine modification. Residues 769–799 (GNYNRGGMPNRGNYNQNFRGRGNNRGYKNQS) form a disordered region. The span at 778–799 (NRGNYNQNFRGRGNNRGYKNQS) shows a compositional bias: low complexity. Lys-814 is subject to N6-acetyllysine; alternate. Lys-814 is covalently cross-linked (Glycyl lysine isopeptide (Lys-Gly) (interchain with G-Cter in SUMO2); alternate).

In terms of assembly, oligomer (via ATPase domain and RNA-binding RGG-box region); oligomerization occurs upon ATP-binding in a chromatin-associated RNAs (caRNAs)- and transcription-dependent manner and is required for chromatin decompaction. ATP hydrolysis is required to cycle from an oligomeric to monomeric state to compact chromatin. Component of the coding region determinant (CRD)-mediated complex, composed of DHX9, HNRNPU, IGF2BP1, SYNCRIP and YBX1. Identified in the spliceosome C complex. Identified in a IGF2BP1-dependent mRNP granule complex containing untranslated mRNAs. Associates with heterogeneous nuclear ribonucleoprotein (hnRNP) particles. Associates (via middle region) with the C-terminal domain (CTD) RNA polymerase II (Pol II) holoenzyme; this association occurs in a RNA-independent manner. Associates (via middle region) with the core-TFIIH basal transcription factor complex; this association inhibits the CTD phosphorylation of RNA polymerase II holoenzyme by down-regulating TFIIH kinase activity. Associates with the telomerase holoenzyme complex. Associates with spindle microtubules (MTs) in a TPX2-dependent manner. Interacts (via C-terminus) with actin; this interaction is direct and mediates association with the phosphorylated CTD of RNA polymerase II and is disrupted in presence of the long non-coding H19 RNA. Interacts with AURKA. Interacts (via C-terminus) with CBX5; this interaction is, at least in part, RNA-dependent. Interacts with CR2. Interacts with CRY1. Interacts (via C-terminus) with EP300; this interaction enhances DNA-binding to nuclear scaffold/matrix attachment region (S/MAR) elements. Interacts with ERBB4. Interacts with GEMIN5. Interacts with IGF2BP1. Interacts with IGF2BP2 and IGF2BP3. Interacts with NCL; this interaction occurs during mitosis. Interacts (via C-terminus) with NR3C1 (via C-terminus). Interacts with PLK1; this interaction induces phosphorylation of HNRNPU at Ser-59 in mitosis. Interacts with POU3F4. Interacts with SMARCA4; this interaction occurs in embryonic stem cells and stimulates global Pol II-mediated transcription. Interacts (via C-terminus) with TOP2A; this interaction protects the topoisomerase TOP2A from degradation and positively regulates the relaxation of supercoiled DNA by TOP2A in a RNA-dependent manner. Interacts with TPX2; this interaction recruits HNRNPU to spindle microtubules (MTs). Interacts with UBQLN2. Interacts (via RNA-binding RGG-box region) with ZBTB7B; the interaction facilitates the recruitment of long non-coding RNA Blnc1 by ZBTB7B. Interacts with ERCC6. As to quaternary structure, (Microbial infection) Interacts with HIV-1 protein Rev. Post-translationally, cleaved at Asp-100 by CASP3 during T-cell apoptosis, resulting in a loss of DNA- and chromatin-binding activities. In terms of processing, extensively phosphorylated. Phosphorylated on Ser-59 by PLK1 and dephosphorylated by protein phosphatase 2A (PP2A) in mitosis. Arg-739 is dimethylated, probably to asymmetric dimethylarginine. Arg-733 is dimethylated, probably to asymmetric dimethylarginine. Post-translationally, citrullinated by PADI4. In terms of tissue distribution, widely expressed.

It is found in the nucleus. It localises to the nucleus matrix. The protein resides in the chromosome. The protein localises to the nucleus speckle. Its subcellular location is the cytoplasm. It is found in the cytoskeleton. It localises to the microtubule organizing center. The protein resides in the centrosome. The protein localises to the centromere. Its subcellular location is the kinetochore. It is found in the spindle. It localises to the spindle pole. The protein resides in the midbody. The protein localises to the cell surface. Its subcellular location is the cytoplasmic granule. Its function is as follows. DNA- and RNA-binding protein involved in several cellular processes such as nuclear chromatin organization, telomere-length regulation, transcription, mRNA alternative splicing and stability, Xist-mediated transcriptional silencing and mitotic cell progression. Plays a role in the regulation of interphase large-scale gene-rich chromatin organization through chromatin-associated RNAs (caRNAs) in a transcription-dependent manner, and thereby maintains genomic stability. Required for the localization of the long non-coding Xist RNA on the inactive chromosome X (Xi) and the subsequent initiation and maintenance of X-linked transcriptional gene silencing during X-inactivation. Plays a role as a RNA polymerase II (Pol II) holoenzyme transcription regulator. Promotes transcription initiation by direct association with the core-TFIIH basal transcription factor complex for the assembly of a functional pre-initiation complex with Pol II in a actin-dependent manner. Blocks Pol II transcription elongation activity by inhibiting the C-terminal domain (CTD) phosphorylation of Pol II and dissociates from Pol II pre-initiation complex prior to productive transcription elongation. Positively regulates CBX5-induced transcriptional gene silencing and retention of CBX5 in the nucleus. Negatively regulates glucocorticoid-mediated transcriptional activation. Key regulator of transcription initiation and elongation in embryonic stem cells upon leukemia inhibitory factor (LIF) signaling. Involved in the long non-coding RNA H19-mediated Pol II transcriptional repression. Participates in the circadian regulation of the core clock component BMAL1 transcription. Plays a role in the regulation of telomere length. Plays a role as a global pre-mRNA alternative splicing modulator by regulating U2 small nuclear ribonucleoprotein (snRNP) biogenesis. Plays a role in mRNA stability. Component of the CRD-mediated complex that promotes MYC mRNA stabilization. Enhances the expression of specific genes, such as tumor necrosis factor TNFA, by regulating mRNA stability, possibly through binding to the 3'-untranslated region (UTR). Plays a role in mitotic cell cycle regulation. Involved in the formation of stable mitotic spindle microtubules (MTs) attachment to kinetochore, spindle organization and chromosome congression. Phosphorylation at Ser-59 by PLK1 is required for chromosome alignement and segregation and progression through mitosis. Also contributes to the targeting of AURKA to mitotic spindle MTs. Binds to double- and single-stranded DNA and RNA, poly(A), poly(C) and poly(G) oligoribonucleotides. Binds to chromatin-associated RNAs (caRNAs). Associates with chromatin to scaffold/matrix attachment region (S/MAR) elements in a chromatin-associated RNAs (caRNAs)-dependent manner. Binds to the Xist RNA. Binds the long non-coding H19 RNA. Binds to SMN1/2 pre-mRNAs at G/U-rich regions. Binds to small nuclear RNAs (snRNAs). Binds to the 3'-UTR of TNFA mRNA. Binds (via RNA-binding RGG-box region) to the long non-coding Xist RNA; this binding is direct and bridges the Xist RNA and the inactive chromosome X (Xi). Also negatively regulates embryonic stem cell differentiation upon LIF signaling. Required for embryonic development. Binds to brown fat long non-coding RNA 1 (Blnc1); facilitates the recruitment of Blnc1 by ZBTB7B required to drive brown and beige fat development and thermogenesis. In terms of biological role, (Microbial infection) Negatively regulates immunodeficiency virus type 1 (HIV-1) replication by preventing the accumulation of viral mRNA transcripts in the cytoplasm. The polypeptide is Heterogeneous nuclear ribonucleoprotein U (Homo sapiens (Human)).